The chain runs to 166 residues: MIIQGKCHTFGNDIDTDAIIPARYLNTTDPGELARHCMEDADPTFAGRVQKGEIIVAGKNFGCGSSREHAPVAIKAAGVAAVVAASFARIFYRNAINIGLPIFESPEAAAGIKAGDEVKIDAGKGEIVNLTRGETYPVAPFPPFMQELIAAGGLMPYVARKVKTSV.

This sequence belongs to the LeuD family. LeuD type 2 subfamily. Heterodimer of LeuC and LeuD.

The catalysed reaction is (2R,3S)-3-isopropylmalate = (2S)-2-isopropylmalate. It participates in amino-acid biosynthesis; L-leucine biosynthesis; L-leucine from 3-methyl-2-oxobutanoate: step 2/4. In terms of biological role, catalyzes the isomerization between 2-isopropylmalate and 3-isopropylmalate, via the formation of 2-isopropylmaleate. The protein is 3-isopropylmalate dehydratase small subunit of Moorella thermoacetica (strain ATCC 39073 / JCM 9320).